Consider the following 75-residue polypeptide: Translational regulator CsrA (75 aa).

It belongs to the CsrA/RsmA family. Homodimer; the beta-strands of each monomer intercalate to form a hydrophobic core, while the alpha-helices form wings that extend away from the core.

Its subcellular location is the cytoplasm. In terms of biological role, a translational regulator that binds mRNA to regulate translation initiation and/or mRNA stability. Usually binds in the 5'-UTR at or near the Shine-Dalgarno sequence preventing ribosome-binding, thus repressing translation. Its main target seems to be the major flagellin gene, while its function is anatagonized by FliW. The sequence is that of Translational regulator CsrA from Acetivibrio thermocellus (strain ATCC 27405 / DSM 1237 / JCM 9322 / NBRC 103400 / NCIMB 10682 / NRRL B-4536 / VPI 7372) (Clostridium thermocellum).